We begin with the raw amino-acid sequence, 167 residues long: Male-specific protein scotti (167 aa).

N-linked (GlcNAc...) asparagine glycosylation is found at Asn-30, Asn-124, and Asn-148.

This sequence belongs to the male-specific scotti family.

Its function is as follows. Post-meiotically transcribed gene that has a role in late spermiogenesis; required for actin cone progression during spermatid individualization. This chain is Male-specific protein scotti, found in Drosophila ananassae (Fruit fly).